The primary structure comprises 883 residues: MSKELSPKYNPAEVEAGRYQKWLDADVFKPSGDQKAKPYSIVIPPPNVTGKLHLGHAWDTTLQDIIIRQKRMQGFDTLWLPGMDHAGIATQAKVEERLRGEGITRYDLGRESFLTKVWEWKDEYATTIKEQWGKMGLSVDYSRERFTLDEGLSKAVRKVFVNLYKKGWIYRGEFIINWDPAARTALSDIEVIHKDVEGAFYHMNYMLEDGSRALEVATTRPETMFGDVAVAVNPEDPRYKDLIGKNVILPIANKLIPIVGDEHADPELGTGVVKITPAHDPNDFLVGQRHNLPQVNVMNDDGTMNELAFEFSGMDRFEARKAVVAKLEEIGALVKIEKRVHSVGHSERTGVVVEPRLSTQWFVKMDQLAKNAIANQDTEDKVEFYPPRFNDTFLQWMENVHDWVISRQLWWGHQIPAWYNADGEMYVGEEAPEGDGWTQDEDVLDTWFSSALWPFSTMGWPEVDSEDFKRYFPTSTLVTGYDIIFFWVSRMIFQSLEFTGRQPFQNVLIHGLIRDEQGRKMSKSLGNGIDPMDVIEKYGADALRWFLSNGSAPGQDVRFSYEKMDASWNFINKIWNISRYILMNNEGLTLDVAHDNVTKVATGEAGNVTDRWILHNLNETIAKVTENFDKFEFGVAGHILYNFIWEEFANWYVELTKEVLYSDNEDDKVITRSVLLYTLDKILRLLHPIMPFVTEEIFGQISEGSIVTAAYPTVNLAFEDLAAHTGVESLKDLIRAVRNARAEVNVAPSKPITILVKTSDSDLEAFFNSNVNYIKRFTNPEHLEIASTIPAPELAMSSVITGAEIYLPLADLLNVEEELARLDKELAKWQKELDMVGKKLSNERFVANAKPEVVQKECDKQADYQAKYDATVARIDEMKKLVK.

The 'HIGH' region motif lies at 46-56; that stretch reads PNVTGKLHLGH. The 'KMSKS' region signature appears at 520 to 524; the sequence is KMSKS. K523 is a binding site for ATP. The stretch at 809 to 883 forms a coiled coil; that stretch reads LADLLNVEEE…RIDEMKKLVK (75 aa).

Belongs to the class-I aminoacyl-tRNA synthetase family. ValS type 1 subfamily. Monomer.

It is found in the cytoplasm. The catalysed reaction is tRNA(Val) + L-valine + ATP = L-valyl-tRNA(Val) + AMP + diphosphate. In terms of biological role, catalyzes the attachment of valine to tRNA(Val). As ValRS can inadvertently accommodate and process structurally similar amino acids such as threonine, to avoid such errors, it has a 'posttransfer' editing activity that hydrolyzes mischarged Thr-tRNA(Val) in a tRNA-dependent manner. The chain is Valine--tRNA ligase from Streptococcus pneumoniae serotype 4 (strain ATCC BAA-334 / TIGR4).